A 791-amino-acid polypeptide reads, in one-letter code: Protein FAM47A (791 aa).

Disordered regions lie at residues 195 to 257 (PVSH…TRRR), 274 to 409 (EDAR…TGVC), and 449 to 573 (VKKT…SEPP). Basic and acidic residues-rich tracts occupy residues 274-288 (EDAR…KTTD) and 333-342 (GESHLRLEHS). The segment covering 349 to 358 (SLRSEPSETG) has biased composition (polar residues). The segment covering 449–462 (VKKTKEPTEPHKSP) has biased composition (basic and acidic residues).

It belongs to the FAM47 family.

In Homo sapiens (Human), this protein is Protein FAM47A (FAM47A).